A 355-amino-acid polypeptide reads, in one-letter code: Phosphoserine aminotransferase (355 aa).

Position 41 (R41) interacts with L-glutamate. Residues A75 to S76, W99, T147, D166, and Q189 each bind pyridoxal 5'-phosphate. K190 carries the N6-(pyridoxal phosphate)lysine modification. Residue N231–T232 participates in pyridoxal 5'-phosphate binding.

Belongs to the class-V pyridoxal-phosphate-dependent aminotransferase family. SerC subfamily. In terms of assembly, homodimer. Requires pyridoxal 5'-phosphate as cofactor.

It is found in the cytoplasm. The catalysed reaction is O-phospho-L-serine + 2-oxoglutarate = 3-phosphooxypyruvate + L-glutamate. It catalyses the reaction 4-(phosphooxy)-L-threonine + 2-oxoglutarate = (R)-3-hydroxy-2-oxo-4-phosphooxybutanoate + L-glutamate. Its pathway is amino-acid biosynthesis; L-serine biosynthesis; L-serine from 3-phospho-D-glycerate: step 2/3. It participates in cofactor biosynthesis; pyridoxine 5'-phosphate biosynthesis; pyridoxine 5'-phosphate from D-erythrose 4-phosphate: step 3/5. Functionally, catalyzes the reversible conversion of 3-phosphohydroxypyruvate to phosphoserine and of 3-hydroxy-2-oxo-4-phosphonooxybutanoate to phosphohydroxythreonine. This Bacteroides thetaiotaomicron (strain ATCC 29148 / DSM 2079 / JCM 5827 / CCUG 10774 / NCTC 10582 / VPI-5482 / E50) protein is Phosphoserine aminotransferase.